A 99-amino-acid polypeptide reads, in one-letter code: Small ribosomal subunit protein uS14c (99 aa).

The tract at residues 46–66 (LQSSPRNSAPTRLHRRCSSTG) is disordered.

The protein belongs to the universal ribosomal protein uS14 family. As to quaternary structure, part of the 30S ribosomal subunit.

The protein resides in the plastid. The protein localises to the chloroplast. In terms of biological role, binds 16S rRNA, required for the assembly of 30S particles. This Pinus thunbergii (Japanese black pine) protein is Small ribosomal subunit protein uS14c.